A 255-amino-acid chain; its full sequence is Small ribosomal subunit protein uS2 (255 aa).

Belongs to the universal ribosomal protein uS2 family.

In Streptococcus uberis (strain ATCC BAA-854 / 0140J), this protein is Small ribosomal subunit protein uS2.